Here is a 207-residue protein sequence, read N- to C-terminus: Putative threonylcarbamoyl-AMP synthase (207 aa).

The YrdC-like domain occupies 15 to 199; it reads EEERKKVLEF…KIISIREGVI (185 aa).

Belongs to the SUA5 family.

It is found in the cytoplasm. The catalysed reaction is L-threonine + hydrogencarbonate + ATP = L-threonylcarbamoyladenylate + diphosphate + H2O. Functionally, required for the formation of a threonylcarbamoyl group on adenosine at position 37 (t(6)A37) in tRNAs that read codons beginning with adenine. Catalyzes the conversion of L-threonine, HCO(3)(-)/CO(2) and ATP to give threonylcarbamoyl-AMP (TC-AMP) as the acyladenylate intermediate, with the release of diphosphate. The protein is Putative threonylcarbamoyl-AMP synthase of Methanocaldococcus jannaschii (strain ATCC 43067 / DSM 2661 / JAL-1 / JCM 10045 / NBRC 100440) (Methanococcus jannaschii).